We begin with the raw amino-acid sequence, 751 residues long: MIIRSPESEVKIVVERDPIKTSFEKWANPGHFSKTLSKTDPETTTWIWNLHADAHDFDSHTEDLEEISRKVFSAHFGQLAIIFTWLSGMYFHGARFSNYEAWLADPTHIKPSAQVVWPIVGQEILNGDVGGGFRGIQITSGFFPIWRASGITSELQLYCTAIGALIFAALMLFAGWFHYHKAAPKLAWFQQVESMLNHHLAGLLGLGSLSWAGHQIHVSLPINQLLDAGVDPKEIPLPHEFILNRDLLNQLYPSFAQGLLPFFTLNWSEYSEILTFRGGLNPVTGGLWLTDTAHHHLAIAVLFLIAGHMYKTNWGIGHSLKEILEAHKGPFTGEGHKGLYEILTNSWHAQLALNLAMLGSLTIIVAHHMYSMPPYPYLAIDYSTQLSLFTHHMWIGGFIIVGAAAHAAIFLVRDYDSTTSYNNLLDRVLRHRDAIISHLNWVCIFLGFHSFGLYIHNDTMSALGRPQDMFSDTAIQLQPIFAQWLQNTHVTAPSFTAPAATASTSLTWGGGDIITVGNKVALLPIPLGTADFLVHHIHAFTIHVTVLILLKGVLFARSSRLIPDKANLGFRFPCDGPGRGGTCQVSAWDHVFLGLFWMYNAISVVIFHFSWKMQSDVWGNISKQGVVTHITGGNFAQSSITINGWLRDFLWAQASQVIQSYGSALSAYGLFFLGAHFVWAFSLMFLFSGRGYWQELIESIVWAHNKLKVAPAIQPRALSIVQGRAVGVAHYLLGGIVTTWAFFLARIIAVE.

8 helical membrane-spanning segments follow: residues 71–94 (VFSA…FHGA), 157–180 (LYCT…FHYH), 196–220 (LNHH…HVSL), 292–310 (TAHH…GHMY), 347–370 (WHAQ…HHMY), 386–412 (LSLF…IFLV), 434–456 (AIIS…LYIH), and 532–550 (FLVH…LILL). The [4Fe-4S] cluster site is built by cysteine 574 and cysteine 583. 2 helical membrane passes run 590–611 (HVFL…HFSW) and 665–687 (LSAY…MFLF). Position 676 (histidine 676) interacts with chlorophyll a'. Methionine 684 and tyrosine 692 together coordinate chlorophyll a. Residue tryptophan 693 participates in phylloquinone binding. The chain crosses the membrane as a helical span at residues 725-745 (AVGVAHYLLGGIVTTWAFFLA).

This sequence belongs to the PsaA/PsaB family. In terms of assembly, the PsaA/B heterodimer binds the P700 chlorophyll special pair and subsequent electron acceptors. PSI consists of a core antenna complex that captures photons, and an electron transfer chain that converts photonic excitation into a charge separation. The eukaryotic PSI reaction center is composed of at least 11 subunits. P700 is a chlorophyll a/chlorophyll a' dimer, A0 is one or more chlorophyll a, A1 is one or both phylloquinones and FX is a shared 4Fe-4S iron-sulfur center. serves as cofactor.

Its subcellular location is the plastid. It is found in the chloroplast thylakoid membrane. It catalyses the reaction reduced [plastocyanin] + hnu + oxidized [2Fe-2S]-[ferredoxin] = oxidized [plastocyanin] + reduced [2Fe-2S]-[ferredoxin]. In terms of biological role, psaA and PsaB bind P700, the primary electron donor of photosystem I (PSI), as well as the electron acceptors A0, A1 and FX. PSI is a plastocyanin-ferredoxin oxidoreductase, converting photonic excitation into a charge separation, which transfers an electron from the donor P700 chlorophyll pair to the spectroscopically characterized acceptors A0, A1, FX, FA and FB in turn. Oxidized P700 is reduced on the lumenal side of the thylakoid membrane by plastocyanin. This is Photosystem I P700 chlorophyll a apoprotein A1 from Welwitschia mirabilis (Tree tumbo).